Here is a 155-residue protein sequence, read N- to C-terminus: dCTP deaminase (155 aa).

Residues 79–84, D95, Q124, and Y138 each bind dCTP; that span reads RSSLAR.

This sequence belongs to the dCTP deaminase family. In terms of assembly, homotrimer.

The catalysed reaction is dCTP + H2O + H(+) = dUTP + NH4(+). It participates in pyrimidine metabolism; dUMP biosynthesis; dUMP from dCTP (dUTP route): step 1/2. Functionally, catalyzes the deamination of dCTP to dUTP. The sequence is that of dCTP deaminase from Thermococcus kodakarensis (strain ATCC BAA-918 / JCM 12380 / KOD1) (Pyrococcus kodakaraensis (strain KOD1)).